Here is a 314-residue protein sequence, read N- to C-terminus: O-antigen chain rhamnosyltransferase RfbN (314 aa).

This sequence belongs to the glycosyltransferase 2 family.

The enzyme catalyses alpha-D-galactosyl-di-trans,octa-cis-undecaprenyl diphosphate + dTDP-beta-L-rhamnose = alpha-L-rhamnosyl-(1-&gt;3)-alpha-D-galactosyl-1-diphospho-di-trans,octa-cis-undecaprenol + dTDP + H(+). The protein operates within bacterial outer membrane biogenesis; LPS O-antigen biosynthesis. Its function is as follows. Rhamnosyltransferase involved in the biosynthesis of the repeat unit of the lipopolysaccharide (LPS) O-antigen region. Catalyzes the addition of a rhamnose to the galactosyl-undecaprenyl diphosphate intermediate. The sequence is that of O-antigen chain rhamnosyltransferase RfbN from Salmonella typhimurium (strain LT2 / SGSC1412 / ATCC 700720).